Here is a 118-residue protein sequence, read N- to C-terminus: Protein RALF-like 24 (118 aa).

The signal sequence occupies residues 1-22; that stretch reads MSRSLALVYLSLLCLQTHLSIS. A propeptide spans 23–63 (removed in mature form); that stretch reads VTVPIPSVNGEIDAMLNRNGVIGEEEGEEMMPSEISRRVMM. Cystine bridges form between cysteine 81/cysteine 91 and cysteine 103/cysteine 109.

It belongs to the plant rapid alkalinization factor (RALF) family. In terms of processing, proteolytically cleaved, probably by S1P, a subtilisin-like serine protease (subtilase).

It localises to the secreted. Functionally, cell signaling peptide that may regulate plant stress, growth, and development. Mediates a rapid alkalinization of extracellular space by mediating a transient increase in the cytoplasmic Ca(2+) concentration leading to a calcium-dependent signaling events through a cell surface receptor and a concomitant activation of some intracellular mitogen-activated protein kinases. The sequence is that of Protein RALF-like 24 (RALFL24) from Arabidopsis thaliana (Mouse-ear cress).